The following is a 217-amino-acid chain: Small ribosomal subunit protein uS11m (217 aa).

The N-terminal 59 residues, 1–59 (MLLQPVWKGCRWTQFVRPIRRWNSTGTNRGVPFSFKDISNQEDITNISYPSSSDSVLTK), are a transit peptide targeting the mitochondrion.

It belongs to the universal ribosomal protein uS11 family. In terms of assembly, component of the mitochondrial small ribosomal subunit (mt-SSU). Mature yeast 74S mitochondrial ribosomes consist of a small (37S) and a large (54S) subunit. The 37S small subunit contains a 15S ribosomal RNA (15S mt-rRNA) and 34 different proteins. The 54S large subunit contains a 21S rRNA (21S mt-rRNA) and 46 different proteins.

It is found in the mitochondrion. Functionally, component of the mitochondrial ribosome (mitoribosome), a dedicated translation machinery responsible for the synthesis of mitochondrial genome-encoded proteins, including at least some of the essential transmembrane subunits of the mitochondrial respiratory chain. The mitoribosomes are attached to the mitochondrial inner membrane and translation products are cotranslationally integrated into the membrane. This chain is Small ribosomal subunit protein uS11m (MRPS18), found in Saccharomyces cerevisiae (strain ATCC 204508 / S288c) (Baker's yeast).